The primary structure comprises 365 residues: Chorismate synthase (365 aa).

Arginine 46 provides a ligand contact to NADP(+). Residues 124-126 (RAS), glycine 284, 299-303 (KPTPS), and arginine 326 contribute to the FMN site.

It belongs to the chorismate synthase family. The cofactor is FMNH2.

It catalyses the reaction 5-O-(1-carboxyvinyl)-3-phosphoshikimate = chorismate + phosphate. It functions in the pathway metabolic intermediate biosynthesis; chorismate biosynthesis; chorismate from D-erythrose 4-phosphate and phosphoenolpyruvate: step 7/7. Its function is as follows. Catalyzes the anti-1,4-elimination of the C-3 phosphate and the C-6 proR hydrogen from 5-enolpyruvylshikimate-3-phosphate (EPSP) to yield chorismate, which is the branch point compound that serves as the starting substrate for the three terminal pathways of aromatic amino acid biosynthesis. This reaction introduces a second double bond into the aromatic ring system. The sequence is that of Chorismate synthase from Pyrobaculum islandicum (strain DSM 4184 / JCM 9189 / GEO3).